A 612-amino-acid chain; its full sequence is Phosphoenolpyruvate carboxykinase [GTP] (612 aa).

Substrate contacts are provided by residues R82 and 221–223; that span reads YGG. Mn(2+)-binding residues include K230 and H250. Substrate is bound at residue S272. Position 273-278 (273-278) interacts with GTP; it reads ACGKTN. The active site involves C274. D297 contributes to the Mn(2+) binding site. 388-390 contacts substrate; that stretch reads NSR. GTP-binding positions include R390, R421, and 516 to 519; that span reads FGEN.

This sequence belongs to the phosphoenolpyruvate carboxykinase [GTP] family. Monomer. Mn(2+) serves as cofactor.

Its subcellular location is the cytoplasm. The catalysed reaction is oxaloacetate + GTP = phosphoenolpyruvate + GDP + CO2. Its pathway is carbohydrate biosynthesis; gluconeogenesis. Catalyzes the conversion of oxaloacetate (OAA) to phosphoenolpyruvate (PEP), the rate-limiting step in the metabolic pathway that produces glucose from lactate and other precursors derived from the citric acid cycle. The chain is Phosphoenolpyruvate carboxykinase [GTP] from Corynebacterium efficiens (strain DSM 44549 / YS-314 / AJ 12310 / JCM 11189 / NBRC 100395).